The primary structure comprises 346 residues: Probable dual-specificity RNA methyltransferase RlmN (346 aa).

The active-site Proton acceptor is E76. Positions 97-329 (SYDRATICVS…TFIRKPRGRD (233 aa)) constitute a Radical SAM core domain. A disulfide bridge connects residues C104 and C334. 3 residues coordinate [4Fe-4S] cluster: C111, C115, and C118. S-adenosyl-L-methionine is bound by residues 162–163 (GE), S192, 215–217 (SLN), and N291. Residue C334 is the S-methylcysteine intermediate of the active site.

It belongs to the radical SAM superfamily. RlmN family. Requires [4Fe-4S] cluster as cofactor.

The protein localises to the cytoplasm. It carries out the reaction adenosine(2503) in 23S rRNA + 2 reduced [2Fe-2S]-[ferredoxin] + 2 S-adenosyl-L-methionine = 2-methyladenosine(2503) in 23S rRNA + 5'-deoxyadenosine + L-methionine + 2 oxidized [2Fe-2S]-[ferredoxin] + S-adenosyl-L-homocysteine. It catalyses the reaction adenosine(37) in tRNA + 2 reduced [2Fe-2S]-[ferredoxin] + 2 S-adenosyl-L-methionine = 2-methyladenosine(37) in tRNA + 5'-deoxyadenosine + L-methionine + 2 oxidized [2Fe-2S]-[ferredoxin] + S-adenosyl-L-homocysteine. Specifically methylates position 2 of adenine 2503 in 23S rRNA and position 2 of adenine 37 in tRNAs. This chain is Probable dual-specificity RNA methyltransferase RlmN, found in Koribacter versatilis (strain Ellin345).